A 642-amino-acid polypeptide reads, in one-letter code: Threonine--tRNA ligase (642 aa).

The TGS domain occupies 1–61 (MPVITLPDGS…ENDATLSIIT (61 aa)). Residues 243–534 (DHRKIGKQLD…LTEEFAGFFP (292 aa)) form a catalytic region. Positions 334, 385, and 511 each coordinate Zn(2+).

This sequence belongs to the class-II aminoacyl-tRNA synthetase family. In terms of assembly, homodimer. The cofactor is Zn(2+).

It localises to the cytoplasm. The enzyme catalyses tRNA(Thr) + L-threonine + ATP = L-threonyl-tRNA(Thr) + AMP + diphosphate + H(+). Functionally, catalyzes the attachment of threonine to tRNA(Thr) in a two-step reaction: L-threonine is first activated by ATP to form Thr-AMP and then transferred to the acceptor end of tRNA(Thr). Also edits incorrectly charged L-seryl-tRNA(Thr). In Salmonella paratyphi A (strain ATCC 9150 / SARB42), this protein is Threonine--tRNA ligase.